The following is a 252-amino-acid chain: tRNA1(Val) (adenine(37)-N6)-methyltransferase (252 aa).

Belongs to the methyltransferase superfamily. tRNA (adenine-N(6)-)-methyltransferase family.

It localises to the cytoplasm. The enzyme catalyses adenosine(37) in tRNA1(Val) + S-adenosyl-L-methionine = N(6)-methyladenosine(37) in tRNA1(Val) + S-adenosyl-L-homocysteine + H(+). Specifically methylates the adenine in position 37 of tRNA(1)(Val) (anticodon cmo5UAC). The sequence is that of tRNA1(Val) (adenine(37)-N6)-methyltransferase from Yersinia pseudotuberculosis serotype O:3 (strain YPIII).